Reading from the N-terminus, the 31-residue chain is Cyclotide mden-K (31 aa).

Positions 1–31 form a cross-link, cyclopeptide (Gly-Asn); that stretch reads GSIPCGESCVWIPCISSVVGCACKNKVCYKN. 3 disulfides stabilise this stretch: cysteine 5/cysteine 21, cysteine 9/cysteine 23, and cysteine 14/cysteine 28.

The protein belongs to the cyclotide family. Bracelet subfamily. In terms of processing, this is a cyclic peptide.

In terms of biological role, probably participates in a plant defense mechanism. The sequence is that of Cyclotide mden-K from Melicytus dentatus (Tree violet).